A 1802-amino-acid polypeptide reads, in one-letter code: Transposon Ty4-H Gag-Pol polyprotein (1802 aa).

Positions 39-115 form a coiled coil; sequence RKVSIKDEQV…IQLLETNENN (77 aa). The ty4 protease stretch occupies residues 381 to 501; that stretch reads NNNLSPVQNE…KTKMVLSRKY (121 aa). The For protease activity; shared with dimeric partner role is filled by Asp-414. Residues 539–599 are integrase-type zinc finger-like; it reads AIKPTSSPGF…EPNEFWCQTC (61 aa). Positions 619–786 constitute an Integrase catalytic domain; the sequence is TDHEPGSSWC…LPLKAISRQP (168 aa). The Mg(2+) site is built by Asp-630 and Asp-695. Positions 1223-1248 are disordered; the sequence is KRKRKRHDKNNSLTSYELERDKKRSK. The Reverse transcriptase Ty1/copia-type domain occupies 1375–1510; that stretch reads RNMFMKTLDI…DILGMDLVYN (136 aa). Mg(2+) contacts are provided by Asp-1383, Asp-1462, Asp-1463, Asp-1644, Glu-1686, and Asp-1720. An RNase H Ty1/copia-type domain is found at 1644-1790; sequence DASVGSEYDA…KRFIQVLKNK (147 aa).

In terms of assembly, the protease is a homodimer, whose active site consists of two apposed aspartic acid residues. Post-translationally, proteolytically processed into capsid protein (CA), Ty4 protease (PR), integrase (IN) and reverse transcriptase/ribonuclease H (RT) proteins. Initially, virus-like particles (VLPs) are composed of the structural unprocessed proteins Gag and Gag-Pol, and also contain the host initiator methionine tRNA (tRNA(i)-Met) which serves as a primer for minus-strand DNA synthesis, and a dimer of genomic Ty RNA. Processing of the polyproteins occurs within the particle and proceeds by an ordered pathway, called maturation. First, the protease (PR) is released by autocatalytic cleavage of the Gag-Pol polyprotein, and this cleavage is a prerequisite for subsequent processing at the remaining sites to release the mature structural and catalytic proteins. Maturation takes place prior to the RT reaction and is required to produce transposition-competent VLPs.

Its subcellular location is the cytoplasm. It localises to the nucleus. The enzyme catalyses DNA(n) + a 2'-deoxyribonucleoside 5'-triphosphate = DNA(n+1) + diphosphate. It carries out the reaction Endonucleolytic cleavage to 5'-phosphomonoester.. Functionally, capsid protein (CA) is the structural component of the virus-like particle (VLP), forming the shell that encapsulates the retrotransposons dimeric RNA genome. Its function is as follows. The aspartyl protease (PR) mediates the proteolytic cleavages of the Gag and Gag-Pol polyproteins after assembly of the VLP. In terms of biological role, reverse transcriptase/ribonuclease H (RT) is a multifunctional enzyme that catalyzes the conversion of the retro-elements RNA genome into dsDNA within the VLP. The enzyme displays a DNA polymerase activity that can copy either DNA or RNA templates, and a ribonuclease H (RNase H) activity that cleaves the RNA strand of RNA-DNA heteroduplexes during plus-strand synthesis and hydrolyzes RNA primers. The conversion leads to a linear dsDNA copy of the retrotransposon that includes long terminal repeats (LTRs) at both ends. Integrase (IN) targets the VLP to the nucleus, where a subparticle preintegration complex (PIC) containing at least integrase and the newly synthesized dsDNA copy of the retrotransposon must transit the nuclear membrane. Once in the nucleus, integrase performs the integration of the dsDNA into the host genome. The sequence is that of Transposon Ty4-H Gag-Pol polyprotein (TY4B-H) from Saccharomyces cerevisiae (strain ATCC 204508 / S288c) (Baker's yeast).